The sequence spans 140 residues: Hexon-interlacing protein (140 aa).

A coiled-coil region spans residues 100–127 (LTALLAQLDSLTRELNVVSQQLLDLRQQ). Serine 135 carries the post-translational modification Phosphoserine; by host.

Belongs to the adenoviridae hexon-interlacing protein family. As to quaternary structure, homotrimer. Interacts with hexon protein; this interaction tethers the hexons together. Self-interacts with adjacent proteins. Interacts with kinesin light chain KLC1; this interaction leads to capsid disruption at the nuclear pore complex during virus entry into host cell.

Its subcellular location is the virion. It is found in the host nucleus. Its function is as follows. Structural component of the virion that forms triskelion structures consisting of three molecules that stabilize three hexon trimers at the center of each icosahedral facet and fixes the peripentonal hexons. Dispensable for assembly. During virus entry, recruits the anterograde motor kinesin-1 to the capsid docked at the nuclear pore complex thereby subjecting the docked capsid to a pulling force. The resulting tension leads to capsid disruption, dispersion of capsid fragments toward cell periphery and eventually viral DNA entry into the host nucleus. The sequence is that of Hexon-interlacing protein from Human adenovirus C serotype 2 (HAdV-2).